The following is a 1009-amino-acid chain: DENN domain-containing protein 1A (1009 aa).

Residues 13–145 enclose the uDENN domain; it reads FEVYVEVAYP…HKLPIPDPGV (133 aa). Residues 162-298 form the cDENN domain; the sequence is ELPSIPENRN…VISSLKNRLK (137 aa). The region spanning 300–378 is the dDENN domain; the sequence is VSTTTGDGVA…DGRLDLLNSG (79 aa). The short motif at 381–385 is the FXDXF motif element; the sequence is FSDVF. The interval 453 to 564 is disordered; the sequence is DIAENGCAPT…TGPVPAPPDR (112 aa). A Phosphoserine modification is found at Ser-473. The segment covering 477 to 489 has biased composition (basic and acidic residues); it reads EAKDPKLREDRRP. Residues 500–509 show a composition bias toward basic residues; that stretch reads PRPHVVKRPK. Residue Thr-519 is modified to Phosphothreonine. A phosphoserine mark is found at Ser-520, Ser-523, Ser-536, Ser-538, and Ser-546. Positions 569 to 578 match the Clathrin box motif; that stretch reads DLLEDVFSNL. Ser-592 carries the post-translational modification Phosphoserine. The segment at 648–714 is disordered; it reads IPSKPPAASP…RKTPELGIVP (67 aa). The residue at position 749 (Ser-749) is a Phosphoserine. 2 disordered regions span residues 796-831 and 928-1009; these read STLPSRPATPNVATPFTPQFSFPPAGTPTPFPQPPL and RSSA…ETFE. Composition is skewed to pro residues over residues 820 to 831 and 945 to 957; these read AGTPTPFPQPPL and GDPPLLPPRPPQG. The span at 972–983 shows a compositional bias: basic and acidic residues; sequence DPFEDLLQKTKQ. The span at 986–997 shows a compositional bias: low complexity; it reads SPSPALAPAPDS. Residues 999–1009 show a composition bias toward basic and acidic residues; it reads EQLRKQWETFE.

As to quaternary structure, interacts with RAB35. Interacts with clathrin and with the adapter protein complex 2, AP-2. Interacts with ITSN1 and SH3GL2. Interacts (when phosphorylated) with YWHAE. Phosphorylated on serine and/or threonine in an Akt-dependent manner. Phosphorylation probably regulates the guanine nucleotide exchange factor (GEF) activity, possibly by disrupting an intramolecular interaction between the DENN domain and the C-terminus of the protein, thereby relieving the autoinhibition.

The protein resides in the cytoplasmic vesicle. It localises to the clathrin-coated vesicle membrane. It is found in the presynaptic cell membrane. With respect to regulation, the guanine nucleotide exchange factor (GEF) activity is autoinhibited. Autoinhibition may be the result of intramolecular interaction between the DENN domain and the C-terminus, which is disrupted upon phosphorylation. Activation is regulated by Akt activation. Guanine nucleotide exchange factor (GEF) regulating clathrin-mediated endocytosis through RAB35 activation. Promotes the exchange of GDP to GTP, converting inactive GDP-bound RAB35 into its active GTP-bound form. Regulates clathrin-mediated endocytosis of synaptic vesicles and mediates exit from early endosomes. Binds phosphatidylinositol-phosphates (PtdInsPs), with some preference for PtdIns(3)P. The protein is DENN domain-containing protein 1A of Homo sapiens (Human).